The chain runs to 471 residues: UDP-N-acetylmuramoylalanine--D-glutamate ligase (471 aa).

127 to 133 (GSNGKST) serves as a coordination point for ATP.

The protein belongs to the MurCDEF family.

Its subcellular location is the cytoplasm. It catalyses the reaction UDP-N-acetyl-alpha-D-muramoyl-L-alanine + D-glutamate + ATP = UDP-N-acetyl-alpha-D-muramoyl-L-alanyl-D-glutamate + ADP + phosphate + H(+). Its pathway is cell wall biogenesis; peptidoglycan biosynthesis. Functionally, cell wall formation. Catalyzes the addition of glutamate to the nucleotide precursor UDP-N-acetylmuramoyl-L-alanine (UMA). This Colwellia psychrerythraea (strain 34H / ATCC BAA-681) (Vibrio psychroerythus) protein is UDP-N-acetylmuramoylalanine--D-glutamate ligase.